The following is a 123-amino-acid chain: Cytochrome c-555 (123 aa).

The signal sequence occupies residues methionine 1 to serine 27. Residues cysteine 46, cysteine 49, histidine 50, and methionine 86 each coordinate heme c.

Binds 1 heme c group covalently per subunit.

This is Cytochrome c-555 from Methylococcus capsulatus (strain ATCC 33009 / NCIMB 11132 / Bath).